The primary structure comprises 42 residues: MINTNQPVAYPIFTFRWLTIHALAVPTVFFLGAITSMQFIQR.

The helical transmembrane segment at 17 to 33 threads the bilayer; it reads WLTIHALAVPTVFFLGA. His21 serves as a coordination point for heme.

This sequence belongs to the PsbE/PsbF family. In terms of assembly, heterodimer of an alpha subunit and a beta subunit. PSII is composed of 1 copy each of membrane proteins PsbA, PsbB, PsbC, PsbD, PsbE, PsbF, PsbH, PsbI, PsbJ, PsbK, PsbL, PsbM, PsbT, PsbX, PsbY, PsbZ, Psb30/Ycf12, at least 3 peripheral proteins of the oxygen-evolving complex and a large number of cofactors. It forms dimeric complexes. The cofactor is heme b.

Its subcellular location is the plastid. The protein localises to the chloroplast thylakoid membrane. In terms of biological role, this b-type cytochrome is tightly associated with the reaction center of photosystem II (PSII). PSII is a light-driven water:plastoquinone oxidoreductase that uses light energy to abstract electrons from H(2)O, generating O(2) and a proton gradient subsequently used for ATP formation. It consists of a core antenna complex that captures photons, and an electron transfer chain that converts photonic excitation into a charge separation. In Emiliania huxleyi (Coccolithophore), this protein is Cytochrome b559 subunit beta.